The sequence spans 192 residues: Large ribosomal subunit protein uL5 (192 aa).

It belongs to the universal ribosomal protein uL5 family. As to quaternary structure, part of the 50S ribosomal subunit; part of the 5S rRNA/L5/L18/L25 subcomplex. Contacts the 5S rRNA and the P site tRNA. Forms a bridge to the 30S subunit in the 70S ribosome.

Functionally, this is one of the proteins that bind and probably mediate the attachment of the 5S RNA into the large ribosomal subunit, where it forms part of the central protuberance. In the 70S ribosome it contacts protein S13 of the 30S subunit (bridge B1b), connecting the 2 subunits; this bridge is implicated in subunit movement. Contacts the P site tRNA; the 5S rRNA and some of its associated proteins might help stabilize positioning of ribosome-bound tRNAs. The chain is Large ribosomal subunit protein uL5 from Mesorhizobium japonicum (strain LMG 29417 / CECT 9101 / MAFF 303099) (Mesorhizobium loti (strain MAFF 303099)).